The sequence spans 434 residues: Putative D-alanyl-D-alanine carboxypeptidase (434 aa).

Residues 7–25 (YLSLLAVSCSVSAAKYPVL) traverse the membrane as a helical; Signal-anchor segment.

Belongs to the peptidase S12 family. YfeW subfamily.

The protein localises to the cell inner membrane. The catalysed reaction is Preferential cleavage: (Ac)2-L-Lys-D-Ala-|-D-Ala. Also transpeptidation of peptidyl-alanyl moieties that are N-acyl substituents of D-alanine.. Penicillin-binding protein. Has low DD-carboxypeptidase activity. This chain is Putative D-alanyl-D-alanine carboxypeptidase, found in Escherichia coli (strain K12).